The primary structure comprises 102 residues: NADH-quinone oxidoreductase subunit K 1 (102 aa).

3 consecutive transmembrane segments (helical) span residues 5–25 (ISHY…GIFL), 31–51 (IIIL…MVAF), and 65–85 (LFIL…LVVF).

This sequence belongs to the complex I subunit 4L family. In terms of assembly, NDH-1 is composed of 14 different subunits. Subunits NuoA, H, J, K, L, M, N constitute the membrane sector of the complex.

It is found in the cell inner membrane. It catalyses the reaction a quinone + NADH + 5 H(+)(in) = a quinol + NAD(+) + 4 H(+)(out). Functionally, NDH-1 shuttles electrons from NADH, via FMN and iron-sulfur (Fe-S) centers, to quinones in the respiratory chain. The immediate electron acceptor for the enzyme in this species is believed to be ubiquinone. Couples the redox reaction to proton translocation (for every two electrons transferred, four hydrogen ions are translocated across the cytoplasmic membrane), and thus conserves the redox energy in a proton gradient. In Rhizobium meliloti (strain 1021) (Ensifer meliloti), this protein is NADH-quinone oxidoreductase subunit K 1.